The sequence spans 212 residues: Dephospho-CoA kinase (212 aa).

The region spanning 4 to 204 (IVALTGGICS…RDYLKAEKTT (201 aa)) is the DPCK domain. 12–17 (CSGKSV) is a binding site for ATP.

Belongs to the CoaE family.

Its subcellular location is the cytoplasm. The enzyme catalyses 3'-dephospho-CoA + ATP = ADP + CoA + H(+). It functions in the pathway cofactor biosynthesis; coenzyme A biosynthesis; CoA from (R)-pantothenate: step 5/5. In terms of biological role, catalyzes the phosphorylation of the 3'-hydroxyl group of dephosphocoenzyme A to form coenzyme A. The sequence is that of Dephospho-CoA kinase from Blochmanniella pennsylvanica (strain BPEN).